The chain runs to 166 residues: MGQMRWNSGTTALISSTERHYLCKGCKRSISESLLIHTRDHISKFSTLGLNSSAKLCLAILGENTYLRYHIVFLLFLNSFRKFDSEQSATQIFDHGKVTAPIALRIVVACSFSSSAGCGIFECQFSTLKHQIMLVSCLNDGRIYVTLSAFLPVRFLFHCVHLLLSG.

This is an uncharacterized protein from Saccharomyces cerevisiae (strain ATCC 204508 / S288c) (Baker's yeast).